Consider the following 143-residue polypeptide: MGMVSEFKQFAMRGNVIDLAVGVVIGAAFGKIVTALVEKIIMPPIGWAIGNVDFSRLAWVLKPAGVDATGKEIPAVVIGYGDFINTVVQFVIIAFAIFLVVKLINRLSQRKPDAPKGPSEEVLLLREIRDSLKNDTLKNPTVP.

2 helical membrane-spanning segments follow: residues 16 to 36 (VIDLAVGVVIGAAFGKIVTAL) and 84 to 104 (INTVVQFVIIAFAIFLVVKLI).

This sequence belongs to the MscL family. Homopentamer.

Its subcellular location is the cell inner membrane. In terms of biological role, channel that opens in response to stretch forces in the membrane lipid bilayer. May participate in the regulation of osmotic pressure changes within the cell. The sequence is that of Large-conductance mechanosensitive channel from Xanthomonas campestris pv. campestris (strain 8004).